The primary structure comprises 493 residues: WAS/WASL-interacting protein family member 1 (493 aa).

Over residues M1 to T14 the composition is skewed to pro residues. A disordered region spans residues M1 to R493. Positions E21 to A31 are enriched in polar residues. A WH2 domain is found at G32–T49. At R33 the chain carries Asymmetric dimethylarginine. Positions K45–K48 are binds actin. Residues A67 to F105 are compositionally biased toward gly residues. Omega-N-methylarginine occurs at positions 126 and 135. Pro residues-rich tracts occupy residues F142–S155, P162–P175, and S183–V195. S143 carries the post-translational modification Phosphoserine. Position 227 is a phosphoserine (S227). 3 stretches are compositionally biased toward pro residues: residues F239–P248, V274–P290, and A298–P315. Phosphoserine is present on residues S330 and S340. Pro residues predominate over residues P336–D361. 3 XRSGPXPPXP motif repeats span residues G342–P351, G364–P373, and P400–P409. The segment covering G403–S424 has biased composition (pro residues). Residues T425–S434 show a composition bias toward polar residues. A compositionally biased stretch (basic and acidic residues) spans A470–G484.

It belongs to the verprolin family. In terms of assembly, binds to WAS within the N-terminal region, at a site distinct from the CDC42-binding site. Binds profilin and actin. Binds to WASL. Interacts with DBNL. Interacts with DBNL. Interacts with FNBP1L (via the SH3 domain).

The protein localises to the cytoplasmic vesicle. Its subcellular location is the cytoplasm. It is found in the cytoskeleton. It localises to the cell projection. The protein resides in the ruffle. Its function is as follows. Plays a role in the reorganization of the actin cytoskeleton. Contributes with NCK1 and GRB2 in the recruitment and activation of WASL. May participate in regulating the subcellular localization of WASL, resulting in the disassembly of stress fibers in favor of filopodia formation. Plays a role in the formation of cell ruffles. This chain is WAS/WASL-interacting protein family member 1 (Wipf1), found in Mus musculus (Mouse).